Here is a 486-residue protein sequence, read N- to C-terminus: ATP synthase subunit beta (486 aa).

164-171 (GGAGVGKT) is an ATP binding site.

Belongs to the ATPase alpha/beta chains family. In terms of assembly, F-type ATPases have 2 components, CF(1) - the catalytic core - and CF(0) - the membrane proton channel. CF(1) has five subunits: alpha(3), beta(3), gamma(1), delta(1), epsilon(1). CF(0) has four main subunits: a(1), b(1), b'(1) and c(9-12).

The protein resides in the cellular thylakoid membrane. The catalysed reaction is ATP + H2O + 4 H(+)(in) = ADP + phosphate + 5 H(+)(out). Produces ATP from ADP in the presence of a proton gradient across the membrane. The catalytic sites are hosted primarily by the beta subunits. This chain is ATP synthase subunit beta, found in Prochlorococcus marinus (strain AS9601).